The following is a 590-amino-acid chain: Sperm-associated microtubule inner protein 4 (590 aa).

Thr219 carries the phosphothreonine modification. Phosphoserine is present on residues Ser407 and Ser422. Lys427 is covalently cross-linked (Glycyl lysine isopeptide (Lys-Gly) (interchain with G-Cter in SUMO2)). Position 442 is a phosphotyrosine (Tyr442). Ser485 is modified (phosphoserine). A Glycyl lysine isopeptide (Lys-Gly) (interchain with G-Cter in SUMO2) cross-link involves residue Lys545. Ser547 bears the Phosphoserine mark.

Predominantly expressed in the testes.

The protein localises to the cytoplasm. Its subcellular location is the cytoskeleton. It localises to the microtubule organizing center. The protein resides in the centrosome. It is found in the flagellum axoneme. Microtubule inner protein (MIP) part of the dynein-decorated doublet microtubules (DMTs) in flagellum axoneme. May serve to reinforce and thus stabilize the microtubule structure in the sperm flagella. This chain is Sperm-associated microtubule inner protein 4, found in Homo sapiens (Human).